The sequence spans 245 residues: Small ribosomal subunit protein uS2 (245 aa).

The protein belongs to the universal ribosomal protein uS2 family.

This chain is Small ribosomal subunit protein uS2, found in Pseudomonas entomophila (strain L48).